The following is a 524-amino-acid chain: Unconventional prefoldin RPB5 interactor (524 aa).

3 disordered regions span residues 1 to 20 (MEAPPDPRPHASAAAPLRAP), 284 to 320 (SVNGSSSYHSNEDDGDNNDDGGDSENDHDTLGVEDNS), and 335 to 373 (VRINTGKNTTLKFSEKKEEAKRKRKNSSGSGHSPQELPM). Positions 296 to 307 (DDGDNNDDGGDS) are enriched in acidic residues. Phosphoserine; by RPS6KB1 is present on serine 361. Serine 431 bears the Phosphoserine mark.

This sequence belongs to the RNA polymerase II subunit 5-mediating protein family. Homodimer. Component of the PAQosome complex which is responsible for the biogenesis of several protein complexes and which consists of R2TP complex members RUVBL1, RUVBL2, RPAP3 and PIH1D1, URI complex members PFDN2, PFDN6, PDRG1, UXT and URI1 as well as ASDURF, POLR2E and DNAAF10/WDR92. Interacts with POLR2E/RPB5, RUVBL2 and RUVBL1. Interacts with PFDN2, PFDN4 and STAP1; the interactions are phosphorylation-dependent and occur in a growth-dependent manner in the mitochondrion. Interacts with UXT. Interacts with PPP1CC; the interaction is phosphorylation-dependent and occurs in a growth factor-dependent manner. Interacts (via the middle C-terminal region) with GTF2F1 and GTF2F2. Interacts with DMAP1. Interacts with TSC1 and TSC2. Interacts with PRPF8 and EFTUD2 in a ZNHIT2-dependent manner. Post-translationally, phosphorylated. Phosphorylation occurs essentially on serine residues. Phosphorylation occurs in response to androgen treatment in prostate cancer cells in a mTOR-dependent manner. Phosphorylated; hyperhosphorylated in mitochondria in a mTORC-dependent signaling pathway. Phosphorylated at Ser-361 by RPS6KB1 in a growth factor- and rapamycin-dependent manner. S6K1-mediated mitochondrial phosphorylation at Ser-361 disrupts the URI1-PPP1CC complex in the mitochondrion, relieves PPP1CC phosphatase inhibition activity and hence engages a negative feedback diminishing RPS6KB1 kinase activity, preventing sustained S6K1-dependent signaling.

The protein localises to the nucleus. It localises to the cytoplasm. It is found in the mitochondrion. Its subcellular location is the cell projection. The protein resides in the dendrite. Functionally, involved in gene transcription regulation. Acts as a transcriptional repressor in concert with the corepressor UXT to regulate androgen receptor (AR) transcription. May act as a tumor suppressor to repress AR-mediated gene transcription and to inhibit anchorage-independent growth in prostate cancer cells. Required for cell survival in ovarian cancer cells. Together with UXT, associates with chromatin to the NKX3-1 promoter region. Its function is as follows. Plays a central role in maintaining S6K1 signaling and BAD phosphorylation under normal growth conditions thereby protecting cells from potential deleterious effects of sustained S6K1 signaling. The URI1-PPP1CC complex acts as a central component of a negative feedback mechanism that counteracts excessive S6K1 survival signaling to BAD in response to growth factors. Mediates inhibition of PPP1CC phosphatase activity in mitochondria. Coordinates the regulation of nutrient-sensitive gene expression availability in a mTOR-dependent manner. Seems to be a scaffolding protein able to assemble a prefoldin-like complex that contains PFDs and proteins with roles in transcription and ubiquitination. The protein is Unconventional prefoldin RPB5 interactor (URI1) of Bos taurus (Bovine).